Here is a 618-residue protein sequence, read N- to C-terminus: Medium-chain acyl-CoA ligase ACSF2, mitochondrial (618 aa).

Residues 1–44 constitute a mitochondrion transit peptide; the sequence is MRATAAYVGMLRLGRMCAGSPGVLGARAALSRSWQEARLQAVRF. Residue K182 is modified to N6-acetyllysine. K185 carries the post-translational modification N6-acetyllysine; alternate. K185 is subject to N6-succinyllysine; alternate. 266–274 is an ATP binding site; the sequence is TSGTTGSPK. An N6-acetyllysine mark is found at K343 and K401. N6-succinyllysine is present on K481. Residues D496 and R511 each coordinate ATP. At K513 the chain carries N6-acetyllysine. Residues K547 and K573 each carry the N6-acetyllysine; alternate modification. Residues K547 and K573 each carry the N6-succinyllysine; alternate modification. K602 contacts ATP. N6-succinyllysine is present on K602.

Belongs to the ATP-dependent AMP-binding enzyme family.

It is found in the mitochondrion. The enzyme catalyses a medium-chain fatty acid + ATP + CoA = a medium-chain fatty acyl-CoA + AMP + diphosphate. The catalysed reaction is octanoate + ATP + CoA = octanoyl-CoA + AMP + diphosphate. Functionally, acyl-CoA synthases catalyze the initial reaction in fatty acid metabolism, by forming a thioester with CoA. Has some preference toward medium-chain substrates. Plays a role in adipocyte differentiation. The chain is Medium-chain acyl-CoA ligase ACSF2, mitochondrial from Macaca fascicularis (Crab-eating macaque).